We begin with the raw amino-acid sequence, 434 residues long: Alpha-enolase (434 aa).

S40 is a Mg(2+) binding site. Substrate-binding residues include H158 and E167. The Proton donor role is filled by E210. The Mg(2+) site is built by D245, E293, and D318. Residues E293 and D318 each coordinate substrate. K343 acts as the Proton acceptor in catalysis. Residues 370–373 (SHRS) and K394 each bind substrate.

It belongs to the enolase family. As to quaternary structure, homodimer. It depends on Mg(2+) as a cofactor.

The protein localises to the cytoplasm. The enzyme catalyses (2R)-2-phosphoglycerate = phosphoenolpyruvate + H2O. It participates in carbohydrate degradation; glycolysis; pyruvate from D-glyceraldehyde 3-phosphate: step 4/5. In Alligator mississippiensis (American alligator), this protein is Alpha-enolase.